An 863-amino-acid polypeptide reads, in one-letter code: DNA mismatch repair protein MutS (863 aa).

607–614 (GPNMAGKS) provides a ligand contact to ATP.

The protein belongs to the DNA mismatch repair MutS family.

Its function is as follows. This protein is involved in the repair of mismatches in DNA. It is possible that it carries out the mismatch recognition step. This protein has a weak ATPase activity. This chain is DNA mismatch repair protein MutS, found in Caldicellulosiruptor saccharolyticus (strain ATCC 43494 / DSM 8903 / Tp8T 6331).